Here is a 377-residue protein sequence, read N- to C-terminus: DNA-directed RNA polymerase subunit alpha (377 aa).

The tract at residues 1–259 (MSDSSHNLLY…KHFSVFEKMD (259 aa)) is alpha N-terminal domain (alpha-NTD). Residues 279–377 (ILHKLVLGIN…KIRSSKNTKG (99 aa)) are alpha C-terminal domain (alpha-CTD).

The protein belongs to the RNA polymerase alpha chain family. Homodimer. The RNAP catalytic core consists of 2 alpha, 1 beta, 1 beta' and 1 omega subunit. When a sigma factor is associated with the core the holoenzyme is formed, which can initiate transcription.

The enzyme catalyses RNA(n) + a ribonucleoside 5'-triphosphate = RNA(n+1) + diphosphate. DNA-dependent RNA polymerase catalyzes the transcription of DNA into RNA using the four ribonucleoside triphosphates as substrates. This chain is DNA-directed RNA polymerase subunit alpha, found in Chlamydia trachomatis serovar L2 (strain ATCC VR-902B / DSM 19102 / 434/Bu).